Here is a 1383-residue protein sequence, read N- to C-terminus: DNA-directed RNA polymerase subunit beta'' (1383 aa).

Zn(2+)-binding residues include cysteine 220, cysteine 289, cysteine 296, and cysteine 299.

The protein belongs to the RNA polymerase beta' chain family. RpoC2 subfamily. In terms of assembly, in plastids the minimal PEP RNA polymerase catalytic core is composed of four subunits: alpha, beta, beta', and beta''. When a (nuclear-encoded) sigma factor is associated with the core the holoenzyme is formed, which can initiate transcription. Zn(2+) serves as cofactor.

It localises to the plastid. The protein resides in the chloroplast. The catalysed reaction is RNA(n) + a ribonucleoside 5'-triphosphate = RNA(n+1) + diphosphate. DNA-dependent RNA polymerase catalyzes the transcription of DNA into RNA using the four ribonucleoside triphosphates as substrates. The chain is DNA-directed RNA polymerase subunit beta'' from Oenothera biennis (German evening primrose).